A 400-amino-acid polypeptide reads, in one-letter code: Probable peptidoglycan glycosyltransferase FtsW (400 aa).

Over 1 to 29 (MVIERIKHLASPLQDWVFTPSPKVMFDRQ) the chain is Cytoplasmic. The helical transmembrane segment at 30-50 (LIWIALGLMLTGLVMVASASF) threads the bilayer. Residues 51-60 (PISTRLTGQP) lie on the Periplasmic side of the membrane. Residues 61–81 (FHFMMRHMLFVFLALSISSIV) form a helical membrane-spanning segment. The Cytoplasmic portion of the chain corresponds to 82 to 95 (LRIELNKWLKYSSH). The chain crosses the membrane as a helical span at residues 96–116 (LLLISLLLLAAVLVVGKSVNG). The Periplasmic segment spans residues 117–122 (AARWLP). A helical transmembrane segment spans residues 123–143 (LGIFNLQPAEVAKLSLFVFIA). At 144–155 (GYLVRRHGEVRD) the chain is on the cytoplasmic side. A helical membrane pass occupies residues 156–176 (SFRGFVKPLLVLITLAFFLLM). At 177 to 178 (QP) the chain is on the periplasmic side. A helical membrane pass occupies residues 179–199 (DLGTTVVMFVTTIAMLFIAGA). Position 200 (Lys200) is a topological domain, cytoplasmic. The chain crosses the membrane as a helical span at residues 201 to 221 (LWQFIALVMGGISLVIVLILA). Residues 222–290 (EPYRMRRVTS…VFAVIAEELG (69 aa)) are Periplasmic-facing. The chain crosses the membrane as a helical span at residues 291 to 311 (FVGVCLVLCLIFALVFKALLI). Topologically, residues 312–321 (GRKCLAHDQR) are cytoplasmic. Residues 322–342 (FGGFLAFGIGIWFAFQTLVNV) form a helical membrane-spanning segment. At 343 to 356 (GAAAGIVPTKGLTL) the chain is on the periplasmic side. The helical transmembrane segment at 357–377 (PLISYGGSSLIIMSVAVSLLI) threads the bilayer. Topologically, residues 378 to 400 (RIDHECRVYLANEPPRSENEEQK) are cytoplasmic.

It belongs to the SEDS family. FtsW subfamily.

The protein localises to the cell inner membrane. It catalyses the reaction [GlcNAc-(1-&gt;4)-Mur2Ac(oyl-L-Ala-gamma-D-Glu-L-Lys-D-Ala-D-Ala)](n)-di-trans,octa-cis-undecaprenyl diphosphate + beta-D-GlcNAc-(1-&gt;4)-Mur2Ac(oyl-L-Ala-gamma-D-Glu-L-Lys-D-Ala-D-Ala)-di-trans,octa-cis-undecaprenyl diphosphate = [GlcNAc-(1-&gt;4)-Mur2Ac(oyl-L-Ala-gamma-D-Glu-L-Lys-D-Ala-D-Ala)](n+1)-di-trans,octa-cis-undecaprenyl diphosphate + di-trans,octa-cis-undecaprenyl diphosphate + H(+). The protein operates within cell wall biogenesis; peptidoglycan biosynthesis. In terms of biological role, peptidoglycan polymerase that is essential for cell division. This is Probable peptidoglycan glycosyltransferase FtsW from Aliivibrio salmonicida (strain LFI1238) (Vibrio salmonicida (strain LFI1238)).